The following is a 541-amino-acid chain: Chloride channel CLIC-like protein 1 (541 aa).

A signal peptide spans 1-18; sequence MLCSLLLCGCLLLITGYA. The Lumenal portion of the chain corresponds to 19-184; sequence HDDDWIDPTD…EDYFGVDPYN (166 aa). The chain crosses the membrane as a helical span at residues 185 to 205; the sequence is VFMVLLCLLCIVALVATELWT. At 206 to 217 the chain is on the cytoplasmic side; that stretch reads YVRWHTQLKRVC. A helical membrane pass occupies residues 218-238; that stretch reads IISFLVSLGWNWIYLYKVAFA. Over 239–329 the chain is Lumenal; sequence QHQANVAKMA…GEFIKALMKE (91 aa). Residues 330–350 form a helical membrane-spanning segment; it reads IPVLLQIPVLVILALAVLGFC. At 351 to 541 the chain is on the cytoplasmic side; that stretch reads YGAGQSVPML…GTDPVSSPCG (191 aa). Residues 362–381 form a disordered region; that stretch reads HFRGPEREPPRALEPDDRRR. The segment covering 364–381 has biased composition (basic and acidic residues); it reads RGPEREPPRALEPDDRRR. Phosphoserine is present on residues Ser-434 and Ser-438. Thr-482 is modified (phosphothreonine). Phosphoserine is present on Ser-504. Over residues 511–522 the composition is skewed to basic and acidic residues; it reads QLKTDSECRPHS. The disordered stretch occupies residues 511 to 541; that stretch reads QLKTDSECRPHSTEAAAAAARGTDPVSSPCG.

Belongs to the chloride channel MCLC family. As to quaternary structure, homomultimers. Interacts with mitochondrial protein PIGBOS1 (via C-terminus); the interaction occurs at the mitochondria-associated endoplasmic reticulum (ER) membrane, a zone of contact between the ER and mitochondrial membranes, but does not appear to play a role in ER-mitochondria tethering and is not affected by ER stress. Interacts with CALR. As to expression, expressed in testis (spermatocytes), liver and lung (at protein level). Expressed in spleen, liver, testis, kidney, heart, brain and lung.

The protein localises to the endoplasmic reticulum membrane. It carries out the reaction chloride(in) = chloride(out). It catalyses the reaction bromide(in) = bromide(out). The catalysed reaction is nitrate(in) = nitrate(out). The enzyme catalyses fluoride(in) = fluoride(out). In terms of biological role, anion-selective channel with Ca(2+)-dependent and voltage-independent gating. Permeable to small monovalent anions with selectivity for bromide &gt; chloride &gt; nitrate &gt; fluoride. Operates in the endoplasmic reticulum (ER) membrane where it mediates chloride efflux to compensate for the loss of positive charges from the ER lumen upon Ca(2+) release. Contributes to the maintenance of ER Ca(2+) pools and activation of unfolded protein response to prevent accumulation of misfolded proteins in the ER lumen. Particularly involved in ER homeostasis mechanisms underlying motor neurons and retinal photoreceptors survival. The chain is Chloride channel CLIC-like protein 1 from Rattus norvegicus (Rat).